The following is a 188-amino-acid chain: Elongation factor P (188 aa).

This sequence belongs to the elongation factor P family.

The protein localises to the cytoplasm. Its pathway is protein biosynthesis; polypeptide chain elongation. In terms of biological role, involved in peptide bond synthesis. Stimulates efficient translation and peptide-bond synthesis on native or reconstituted 70S ribosomes in vitro. Probably functions indirectly by altering the affinity of the ribosome for aminoacyl-tRNA, thus increasing their reactivity as acceptors for peptidyl transferase. The chain is Elongation factor P from Nitrobacter winogradskyi (strain ATCC 25391 / DSM 10237 / CIP 104748 / NCIMB 11846 / Nb-255).